The primary structure comprises 480 residues: MEYEVVIGLEVHAELATKSKIFCSCTTEFGGEPNTHCCPICTGMPGVLPVLNKKAVEYAIMAGLATNCQIARYSKQDRKNYFYPDLPKAYQISQYDLPLCYNGYIDIEVNGQKKRIGIKRIHIEEDAGKLLHDQWEEGSLVDFNRCGVPLIEIVTEPDLRSSEETRIFLEKLKAILQYTGVSDCKMQEGSLRVDVNLSVRPKGSKEFGTRTEMKNLNSFRSVVRAIEYEAKRQIEVLESGGVVVQETRRWDEAKGITLSMRTKEEAHDYRYFPEPDLPPIIVDDNWIEEIRKRIPELPDQKKERYIKEYGLPEYDAGVLTSSNAIANYFEECIKYTQNIKAASNWMMGEIMRILNDRGLEPEEIVNIKIRPNQLASLINLVDNKTISNTIAKQVFEEMFETGKDPEVIVKEKGLVQITDRNVILEAVKQAIANNPKSVEDYKNGKDKAFGFLVGQVMKITKGKANPQLVNEILREELEKI.

Belongs to the GatB/GatE family. GatB subfamily. Heterotrimer of A, B and C subunits.

It carries out the reaction L-glutamyl-tRNA(Gln) + L-glutamine + ATP + H2O = L-glutaminyl-tRNA(Gln) + L-glutamate + ADP + phosphate + H(+). The enzyme catalyses L-aspartyl-tRNA(Asn) + L-glutamine + ATP + H2O = L-asparaginyl-tRNA(Asn) + L-glutamate + ADP + phosphate + 2 H(+). In terms of biological role, allows the formation of correctly charged Asn-tRNA(Asn) or Gln-tRNA(Gln) through the transamidation of misacylated Asp-tRNA(Asn) or Glu-tRNA(Gln) in organisms which lack either or both of asparaginyl-tRNA or glutaminyl-tRNA synthetases. The reaction takes place in the presence of glutamine and ATP through an activated phospho-Asp-tRNA(Asn) or phospho-Glu-tRNA(Gln). This Caldicellulosiruptor saccharolyticus (strain ATCC 43494 / DSM 8903 / Tp8T 6331) protein is Aspartyl/glutamyl-tRNA(Asn/Gln) amidotransferase subunit B.